The sequence spans 234 residues: Large ribosomal subunit protein uL3 (234 aa).

The segment at 137–156 (AGHGVERKHRSPGSVGGCAT) is disordered.

It belongs to the universal ribosomal protein uL3 family. In terms of assembly, part of the 50S ribosomal subunit. Forms a cluster with proteins L14 and L19.

Its function is as follows. One of the primary rRNA binding proteins, it binds directly near the 3'-end of the 23S rRNA, where it nucleates assembly of the 50S subunit. The polypeptide is Large ribosomal subunit protein uL3 (Frankia alni (strain DSM 45986 / CECT 9034 / ACN14a)).